Consider the following 358-residue polypeptide: Branched-chain amino acid aminotransferase gloG (358 aa).

Position 91 (Arg-91) interacts with pyridoxal 5'-phosphate. The active-site Proton acceptor is Lys-195. Lys-195 is modified (N6-(pyridoxal phosphate)lysine). A pyridoxal 5'-phosphate-binding site is contributed by Glu-231.

The protein belongs to the class-IV pyridoxal-phosphate-dependent aminotransferase family. Requires pyridoxal 5'-phosphate as cofactor.

It catalyses the reaction L-isoleucine + 2-oxoglutarate = (S)-3-methyl-2-oxopentanoate + L-glutamate. The enzyme catalyses L-leucine + 2-oxoglutarate = 4-methyl-2-oxopentanoate + L-glutamate. The catalysed reaction is L-valine + 2-oxoglutarate = 3-methyl-2-oxobutanoate + L-glutamate. It participates in mycotoxin biosynthesis. Branched-chain amino acid aminotransferase; part of the gene cluster that mediates the biosynthesis of pneumocandins, lipohexapeptides of the echinocandin family that prevent fungal cell wall formation by non-competitive inhibition of beta-1,3-glucan synthase. The 10,12-dimethylmyristoyl side chain is synthesized by the reducing polyketide synthase gloL/GLPKS4. The thioesterase gloN/GLHYD exclusively interacts with gloL/GLPKS4 to maintain turnover of the polyketide side chain. The 10R,12S-dimethylmyristic acid is then transferred to the first thiolation domain of the nonribosomal peptide synthetase gloA/GLNRPS4 by the acyl-AMP ligase gloD/GLligase, followed by its acylation to L-ornithine to trigger elongation of the cyclic hexapeptide. L-ornithine, 4R-hydroxyl-L-proline (generated from L-proline by the dioxygenase gloF/GLOXY2), 3S-hydroxyl-L-homotyrosine (generated by gloG/GLHtyB, gloH/GLHtyA, gloI/GLHtyC, gloJ/GLHtyD and hydroxylated at C-3 by the dioxygenase gloM/GLOXY1), 3R-hydroxyl-L-glutamine (generated from L-glutamine probably by the dioxygenase gloE/GLOXY3) and 3S-hydroxyl-L-proline (generated from L-proline by the dioxygenase gloF/GLOXY2 to yield pneumocandin B0), or 3S-hydroxyl-4S-methyl-L-proline (generated from L-leucine by the dioxygenase gloC/GLOXY4 to yield pneumocandin A0) are sequentially added to the growing chain. The last C domain of gloA/GLNRPS4 is proposed to be responsible for cyclization by condensation to form the peptide bond between L-ornithine and 3S-hydroxyl-4S-methyl-L-proline (for pneumocandin A0) or 3S-hydroxyl-L-proline (for pneumocandin B0). Finally, the subsequent C-4 hydroxylation of 3S-hydroxyl-L-homotyrosine and L-ornithine dihydroxylation at C-4 and C-5 are performed by the cytochrome P450 monooxygenases gloP/GLP450-1 and gloO/GLP450-2, respectively. This chain is Branched-chain amino acid aminotransferase gloG, found in Glarea lozoyensis (strain ATCC 20868 / MF5171).